Reading from the N-terminus, the 309-residue chain is Homoserine O-acetyltransferase (309 aa).

Cys-148 functions as the Acyl-thioester intermediate in the catalytic mechanism. The substrate site is built by Lys-169 and Ser-198. His-241 (proton acceptor) is an active-site residue. The active site involves Glu-243. Arg-255 provides a ligand contact to substrate.

This sequence belongs to the MetA family.

The protein resides in the cytoplasm. It catalyses the reaction L-homoserine + acetyl-CoA = O-acetyl-L-homoserine + CoA. It participates in amino-acid biosynthesis; L-methionine biosynthesis via de novo pathway; O-acetyl-L-homoserine from L-homoserine: step 1/1. In terms of biological role, transfers an acetyl group from acetyl-CoA to L-homoserine, forming acetyl-L-homoserine. In vitro, can also use propionyl-CoA as acyl donor. This chain is Homoserine O-acetyltransferase, found in Shouchella clausii (Alkalihalobacillus clausii).